Consider the following 895-residue polypeptide: Dystroglycan 1 (895 aa).

The first 29 residues, 1 to 29, serve as a signal peptide directing secretion; the sequence is MRMSVGSAVPLPLWGRTFLLLLSVAVTQS. Positions 30 to 408 are required for laminin recognition; sequence HWPSEPSEAV…SQIRPTMTIP (379 aa). The O-glycosylated at one site stretch occupies residues 49 to 71; sequence SMHSALSDLHETVPTVVGIPDGT. N-linked (GlcNAc...) asparagine glycosylation is present at Asn-141. Cys-182 and Cys-264 are oxidised to a cystine. Positions 316-485 are mucin-like domain; it reads ATPTPVTAIG…PATRMRTTTS (170 aa). Residues Thr-317, Thr-319, and Thr-379 are each glycosylated (O-linked (Man6P...) threonine). A disordered region spans residues 381–500; it reads TLGPIQPTRV…GEPNQRPELK (120 aa). A compositionally biased stretch (polar residues) spans 393–403; the sequence is AGTTVPSQIRP. Over residues 413–447 the composition is skewed to low complexity; the sequence is PSTVTTPPTTTTKKPRVSTPRPATPSTDSSTTTTR. The O-glycosylated at seven sites with GalNAc stretch occupies residues 463 to 485; it reads TTKAPITRLETASPATRMRTTTS. The Peptidase S72 domain occupies 603–712; sequence KAPARFKAKL…MSITVTGSGS (110 aa). Asn-641, Asn-649, and Asn-661 each carry an N-linked (GlcNAc...) asparagine glycan. The Extracellular segment spans residues 654–749; it reads SIVVEWTNNT…DPEKSSEDDV (96 aa). An intrachain disulfide couples Cys-669 to Cys-713. The tract at residues 724–747 is disordered; it reads PMRVPSEAPATEVPDRDPEKSSED. Positions 736 to 747 are enriched in basic and acidic residues; the sequence is VPDRDPEKSSED. Residues 750–775 form a helical membrane-spanning segment; that stretch reads YLHTVIPAVVVAAILLIAGIIAMICY. The Nuclear localization signal motif lies at 776–782; that stretch reads RKKRKGK. At 776–895 the chain is on the cytoplasmic side; sequence RKKRKGKLTL…YRSPPPYVPP (120 aa). Thr-790 is subject to Phosphothreonine. Residues 819–895 are required for interaction with CAV3; the sequence is LQEEKAPLPP…YRSPPPYVPP (77 aa). The segment at 823–895 is disordered; that stretch reads KAPLPPPEYP…YRSPPPYVPP (73 aa). Over residues 832–846 the composition is skewed to polar residues; it reads PNQSMPETTPLNQDT. Residues 859-870 show a composition bias toward pro residues; sequence SAPPYQPPPPFT. The tract at residues 880–895 is required for binding DMD and UTRN; the sequence is PKNMTPYRSPPPYVPP. The PPXY motif motif lies at 889-892; the sequence is PPPY. The residue at position 892 (Tyr-892) is a Phosphotyrosine; by SRC.

In terms of assembly, monomer. Heterodimer of alpha- and beta-dystroglycan subunits which are the central components of the dystrophin-glycoprotein complex. This complex then can form a dystrophin-associated glycoprotein complex (DGC) which is composed of three subcomplexes: a cytoplasmic complex comprised of DMD (or UTRN), DTNA and a number of syntrophins, such as SNTB1, SNTB2, SNTG1 and SNTG2, the transmembrane dystroglycan complex, and the sarcoglycan-sarcospan complex. Interacts (via the N-terminal of alphaDAG1) with LARGE1; the interaction enhances laminin binding. Interacts with SGCD. Interacts with AGR2 and AGR3. Interacts (betaDAG1) with DMD; the interaction is inhibited by phosphorylation on the PPXY motif. Interacts (betaDAG1, via its PPXY motif) with UTRN (via its WWW and ZZ domains); the interaction is inhibited by phosphorylation on the PPXY motif. Interacts (betaDAG1, via its phosphorylated PPXY motif) with the SH2 domain-containing proteins, FYN, CSK, NCK and SHC. Interacts (betaDAG1) with CAV3 (via a central WW-like domain); the interaction disrupts the binding of DMD. BetaDAG1 directly interacts with ANK3, but not with ANK2; this interaction does not interfere with DMD-binding and is required for retention at costameres. Identified in a dystroglycan complex that contains at least PRX, DRP2, UTRN, DMD and DAG1. Interacts with POMGNT1. BetaDAG1 interacts with CD93. O-glycosylated. POMGNT1 catalyzes the initial addition of N-acetylglucosamine, giving rise to the GlcNAc(beta1-2)Man(alpha1-)O-Ser/Thr moiety and thus providing the necessary basis for the addition of further carbohydrate moieties. Heavily O-glycosylated comprising of up to two thirds of its mass and the carbohydrate composition differs depending on tissue type. Mucin-type O-glycosylation is important for ligand binding activity. O-mannosylation is found in high abundance in both brain and muscle where the most abundant glycan is Sia-alpha-2-3-Gal-beta-1-4-Glc-NAc-beta-1-2-Man. In muscle, glycosylation on Thr-317, Thr-319 and Thr-379 by a phosphorylated O-mannosyl glycan with the structure 2-(N-acetylamido)-2-deoxygalactosyl-beta-1,3-2-(N-acetylamido)-2-deoxyglucosyl-beta-1,4-6-phosphomannose is mediated by like-acetylglucosaminyltransferase (LARGE1) protein amd is required for laminin binding. O-glycosylated in the N-terminal region with a core 1 or possibly core 8 glycan. The brain form displays a unique glycosylation pattern which is absent in other tissues; this form shows enhanced binding to laminin LAMA5 compared to the skeletal muscle form. Post-translationally, N-glycosylated. In terms of processing, autolytic cleavage produces the alpha and beta subunits. In cutaneous cells, as well as in certain pathological conditions, shedding of beta-dystroglycan can occur releasing a peptide of about 30 kDa. SRC-mediated phosphorylation of the PPXY motif of the beta subunit recruits SH2 domain-containing proteins, but inhibits binding to WWW domain-containing proteins, DMD and UTRN. This phosphorylation also inhibits nuclear entry. As to expression, expressed in brain (at protein level). Expressed in the myelin sheath of peripheral nerves.

The protein resides in the secreted. It is found in the extracellular space. It localises to the cell membrane. The protein localises to the cytoplasm. Its subcellular location is the cytoskeleton. The protein resides in the nucleus. It is found in the nucleoplasm. It localises to the sarcolemma. The protein localises to the postsynaptic cell membrane. The dystroglycan complex is involved in a number of processes including laminin and basement membrane assembly, sarcolemmal stability, cell survival, peripheral nerve myelination, nodal structure, cell migration, and epithelial polarization. Functionally, extracellular peripheral glycoprotein that acts as a receptor for extracellular matrix proteins containing laminin-G domains. Receptor for laminin-2 (LAMA2) and agrin in peripheral nerve Schwann cells. Also acts as a receptor for laminin LAMA5. Its function is as follows. Transmembrane protein that plays important roles in connecting the extracellular matrix to the cytoskeleton. Acts as a cell adhesion receptor in both muscle and non-muscle tissues. Receptor for both DMD and UTRN and, through these interactions, scaffolds axin to the cytoskeleton. Also functions in cell adhesion-mediated signaling and implicated in cell polarity. The sequence is that of Dystroglycan 1 from Bos taurus (Bovine).